A 347-amino-acid polypeptide reads, in one-letter code: N6-Methyl-AMP deaminase-L (347 aa).

Zn(2+) is bound by residues H19 and H21. Residues H21, N23, H69, 101–104 (STPR), D142, and G175 contribute to the N(6)-methyl-AMP site. H202 is a binding site for Zn(2+). Residues E205, D283, and D284 each contribute to the N(6)-methyl-AMP site. E205 (proton donor) is an active-site residue. D283 contacts Zn(2+).

The protein belongs to the metallo-dependent hydrolases superfamily. Adenosine and AMP deaminases family. In terms of assembly, monomer. It depends on Zn(2+) as a cofactor.

It carries out the reaction N(6)-methyl-AMP + H2O + H(+) = IMP + methylamine. Its function is as follows. Catalyzes the hydrolysis of the free cytosolic methylated adenosine nucleotide N(6)-methyl-AMP (N6-mAMP) to produce inositol monophosphate (IMP) and methylamine. Is required for the catabolism of cytosolic N6-mAMP, which is derived from the degradation of mRNA containing N6-methylated adenine (m6A). This Xenopus laevis (African clawed frog) protein is N6-Methyl-AMP deaminase-L (mapda.L).